The following is a 354-amino-acid chain: Neutral protease 2 homolog SNOG_02177 (354 aa).

The first 19 residues, 1 to 19 (MKFQILSVAALASLASAVS), serve as a signal peptide directing secretion. Positions 20 to 182 (DALDKRDSPL…WIDLAKRTIV (163 aa)) are excised as a propeptide. Cystine bridges form between Cys-186/Cys-257 and Cys-264/Cys-282. The N-linked (GlcNAc...) asparagine glycan is linked to Asn-214. A Zn(2+)-binding site is contributed by His-306. Glu-307 is an active-site residue. His-310 is a Zn(2+) binding site.

It belongs to the peptidase M35 family. It depends on Zn(2+) as a cofactor.

The protein localises to the secreted. It catalyses the reaction Preferential cleavage of bonds with hydrophobic residues in P1'. Also 3-Asn-|-Gln-4 and 8-Gly-|-Ser-9 bonds in insulin B chain.. Secreted metalloproteinase that allows assimilation of proteinaceous substrates. Shows high activities on basic nuclear substrates such as histone and protamine. This Phaeosphaeria nodorum (strain SN15 / ATCC MYA-4574 / FGSC 10173) (Glume blotch fungus) protein is Neutral protease 2 homolog SNOG_02177.